The following is a 92-amino-acid chain: Precursor of CEP12 (92 aa).

A signal peptide spans 1-30; it reads MVNRDNSIVALSFFMLFLLVLHLHFETTTA. The propeptide occupies 31–70; it reads ARKPVRVFGPPSSIEWSPPSPPKDDFEWFEINIYKNIEQT. The disordered stretch occupies residues 70–92; the sequence is TAFRPTGQGPSQGIGHKDPPGAP. Proline 74 and proline 79 each carry hydroxyproline. A propeptide spanning residues 86 to 92 is cleaved from the precursor; that stretch reads KDPPGAP.

The protein belongs to the C-terminally encoded plant signaling peptide (CEP) family. In terms of assembly, interacts with CEP receptors (e.g. CEPR1 and CEPR2). Post-translationally, the mature small signaling peptide is generated by proteolytic processing of the longer precursor.

It is found in the secreted. It localises to the extracellular space. The protein localises to the apoplast. Functionally, extracellular signaling peptide that may regulate primary root growth rate and systemic nitrogen (N)-demand signaling. The chain is Precursor of CEP12 from Arabidopsis thaliana (Mouse-ear cress).